A 160-amino-acid chain; its full sequence is Protein max (160 aa).

Over residues 1–13 (MSDNDDIEVESDE) the composition is skewed to acidic residues. The tract at residues 1-40 (MSDNDDIEVESDEEQPRFQSAADKRAHHNALERKRRDHIK) is disordered. Position 2 is an N-acetylserine (Ser-2). Phosphoserine is present on residues Ser-2 and Ser-11. One can recognise a bHLH domain in the interval 23-74 (DKRAHHNALERKRRDHIKDSFHSLRDSVPSLQGEKASRAQILDKATEYIQYM). Over residues 29–40 (NALERKRRDHIK) the composition is skewed to basic and acidic residues. Lys-66 carries the N6-acetyllysine modification. The segment at 81 to 102 (HQQDIDDLKRQNALLEQQVRAL) is leucine-zipper. The interval 104 to 160 (KARSSAQLQTNYPSSDNSLYTNAKGGTISAFDGGSDSSSESEPEEPQSRKKLRMEAS) is disordered. Ser-107 is subject to Phosphoserine. Over residues 107–124 (SSAQLQTNYPSSDNSLYT) the composition is skewed to polar residues. N6-acetyllysine is present on residues Lys-153 and Lys-154.

It belongs to the MAX family. Efficient DNA binding requires dimerization with another bHLH protein. Binds DNA as a heterodimer with MYC or MAD. Part of the E2F6.com-1 complex in G0 phase composed of E2F6, MGA, MAX, TFDP1, CBX3, BAT8, EUHMTASE1, RING1, RNF2, MBLR, L3MBTL2 and YAF2. Component of some MLL1/MLL complex, at least composed of the core components KMT2A/MLL1, ASH2L, HCFC1/HCF1, WDR5 and RBBP5, as well as the facultative components BACC1, CHD8, E2F6, HSP70, INO80C, KANSL1, LAS1L, MAX, MCRS1, MGA, MYST1/MOF, PELP1, PHF20, PRP31, RING2, RUVB1/TIP49A, RUVB2/TIP49B, SENP3, TAF1, TAF4, TAF6, TAF7, TAF9 and TEX10. Interacts with SPAG9. The heterodimer MYC:MAX interacts with ABI1; the interaction may enhance MYC:MAX transcriptional activity. In terms of processing, phosphorylated.

The protein resides in the nucleus. It localises to the cell projection. The protein localises to the dendrite. Transcription regulator. Forms a sequence-specific DNA-binding protein complex with MYC or MAD which recognizes the core sequence 5'-CAC[GA]TG-3'. The MYC:MAX complex is a transcriptional activator, whereas the MAD:MAX complex is a repressor. CpG methylation of the recognition site greatly inhibits DNA binding, suggesting that DNA methylation may regulate the MYC:MAX complex in vivo. May repress transcription via the recruitment of a chromatin remodeling complex containing H3 'Lys-9' histone methyltransferase activity. Represses MYC transcriptional activity from E-box elements. The sequence is that of Protein max from Mus musculus (Mouse).